Consider the following 79-residue polypeptide: Sec-independent protein translocase protein TatA (79 aa).

Residues 1-21 (MGGFTSIWHWVIVLLVIVLLF) traverse the membrane as a helical segment. The interval 54–79 (ELKTLDAQATQTKVHETSEIKSKQES) is disordered. A compositionally biased stretch (basic and acidic residues) spans 66–79 (KVHETSEIKSKQES).

This sequence belongs to the TatA/E family. In terms of assembly, the Tat system comprises two distinct complexes: a TatABC complex, containing multiple copies of TatA, TatB and TatC subunits, and a separate TatA complex, containing only TatA subunits. Substrates initially bind to the TatABC complex, which probably triggers association of the separate TatA complex to form the active translocon.

It is found in the cell inner membrane. Functionally, part of the twin-arginine translocation (Tat) system that transports large folded proteins containing a characteristic twin-arginine motif in their signal peptide across membranes. TatA could form the protein-conducting channel of the Tat system. The protein is Sec-independent protein translocase protein TatA of Helicobacter pylori (strain J99 / ATCC 700824) (Campylobacter pylori J99).